The chain runs to 238 residues: Ribonuclease PH (238 aa).

Phosphate-binding positions include arginine 86 and 124 to 126 (GTR).

It belongs to the RNase PH family. In terms of assembly, homohexameric ring arranged as a trimer of dimers.

It carries out the reaction tRNA(n+1) + phosphate = tRNA(n) + a ribonucleoside 5'-diphosphate. Functionally, phosphorolytic 3'-5' exoribonuclease that plays an important role in tRNA 3'-end maturation. Removes nucleotide residues following the 3'-CCA terminus of tRNAs; can also add nucleotides to the ends of RNA molecules by using nucleoside diphosphates as substrates, but this may not be physiologically important. Probably plays a role in initiation of 16S rRNA degradation (leading to ribosome degradation) during starvation. The protein is Ribonuclease PH of Geobacter sulfurreducens (strain ATCC 51573 / DSM 12127 / PCA).